Here is a 2340-residue protein sequence, read N- to C-terminus: Protein pad-1 (2340 aa).

Disordered regions lie at residues 411-458 and 1910-1959; these read KLIK…EPSI and TRNS…RRDP. Basic and acidic residues predominate over residues 415-432; sequence KRPDSKPPRKPGDREGLH. Positions 437–448 are enriched in polar residues; it reads SLHSGVSGNSED. A compositionally biased stretch (low complexity) spans 1922–1934; it reads GGSITSGSTSTTT.

It belongs to the DOP1 family.

In terms of biological role, essential for cell patterning during gastrulation. May be involved in protein traffic between late Golgi and early endosomes. This chain is Protein pad-1 (pad-1), found in Caenorhabditis briggsae.